A 144-amino-acid chain; its full sequence is Monobin (144 aa).

The first 16 residues, 1 to 16 (MRLLALFAFAVAVVSA), serve as a signal peptide directing secretion. Pyrrolidone carboxylic acid is present on Gln-17. Residues 18 to 73 (RNQMCQQPRTQGSCDASNQITKFFYTGSGCTSAPVCSDTDGGYGTEDECIQACTVQ) enclose the BPTI/Kunitz inhibitor 1 domain. 3 disulfide bridges follow: Cys-22-Cys-70, Cys-31-Cys-53, and Cys-47-Cys-66. The tract at residues 74–85 (GGHHNEGAGEEG) is linker. Positions 86 to 139 (CSGDPPRGDCGGQVEERYYFDSTTRTCQTFEYRGCSSGNPDNSYETEIECEIAC) constitute a BPTI/Kunitz inhibitor domain. Disulfide bonds link Cys-86–Cys-139, Cys-95–Cys-120, and Cys-112–Cys-135. The short motif at 92 to 94 (RGD) is the Cell attachment site element.

The N-terminus is blocked. In terms of tissue distribution, expressed in salivary glands.

Its subcellular location is the cytoplasmic vesicle. The protein resides in the secretory vesicle. It localises to the secreted. Tick salivary thrombin inhibitor that plays an important part in the anti-hemostatic strategy of ticks. This Argas monolakensis (Mono lake bird tick) protein is Monobin.